The chain runs to 129 residues: Small ribosomal subunit protein uS12 (129 aa).

Positions 1-25 (MPTYNQLVRFGRKSKTRKTKSPALE) are disordered. Over residues 10-20 (FGRKSKTRKTK) the composition is skewed to basic residues. Asp-89 is modified (3-methylthioaspartic acid). Residues 110-129 (RKQGRSRYGAPSKQVAVTKK) form a disordered region.

It belongs to the universal ribosomal protein uS12 family. As to quaternary structure, part of the 30S ribosomal subunit. Contacts proteins S8 and S17. May interact with IF1 in the 30S initiation complex.

In terms of biological role, with S4 and S5 plays an important role in translational accuracy. Its function is as follows. Interacts with and stabilizes bases of the 16S rRNA that are involved in tRNA selection in the A site and with the mRNA backbone. Located at the interface of the 30S and 50S subunits, it traverses the body of the 30S subunit contacting proteins on the other side and probably holding the rRNA structure together. The combined cluster of proteins S8, S12 and S17 appears to hold together the shoulder and platform of the 30S subunit. This is Small ribosomal subunit protein uS12 from Rickettsia canadensis (strain McKiel).